Here is a 320-residue protein sequence, read N- to C-terminus: Aspartate carbamoyltransferase catalytic subunit (320 aa).

Carbamoyl phosphate-binding residues include R70 and T71. Position 98 (K98) interacts with L-aspartate. Residues R120, H149, and Q152 each contribute to the carbamoyl phosphate site. L-aspartate is bound by residues R182 and R237. Residues G278 and P279 each coordinate carbamoyl phosphate.

This sequence belongs to the aspartate/ornithine carbamoyltransferase superfamily. ATCase family. In terms of assembly, heterododecamer (2C3:3R2) of six catalytic PyrB chains organized as two trimers (C3), and six regulatory PyrI chains organized as three dimers (R2).

It carries out the reaction carbamoyl phosphate + L-aspartate = N-carbamoyl-L-aspartate + phosphate + H(+). It participates in pyrimidine metabolism; UMP biosynthesis via de novo pathway; (S)-dihydroorotate from bicarbonate: step 2/3. Its function is as follows. Catalyzes the condensation of carbamoyl phosphate and aspartate to form carbamoyl aspartate and inorganic phosphate, the committed step in the de novo pyrimidine nucleotide biosynthesis pathway. The sequence is that of Aspartate carbamoyltransferase catalytic subunit from Ruthia magnifica subsp. Calyptogena magnifica.